The chain runs to 288 residues: Polyamine aminopropyltransferase (288 aa).

The PABS domain occupies 11–245 (IEWYPRGYGV…SPWSFLVGVK (235 aa)). An S-methyl-5'-thioadenosine-binding site is contributed by Gln36. Spermidine is bound by residues His67 and Asp91. S-methyl-5'-thioadenosine contacts are provided by residues Glu111 and 148–149 (DG). Asp166 serves as the catalytic Proton acceptor. Residue 166–169 (DSTD) participates in spermidine binding. Pro173 serves as a coordination point for S-methyl-5'-thioadenosine.

Belongs to the spermidine/spermine synthase family. In terms of assembly, homodimer or homotetramer.

Its subcellular location is the cytoplasm. The catalysed reaction is S-adenosyl 3-(methylsulfanyl)propylamine + agmatine = N(1)-(3-aminopropyl)agmatine + S-methyl-5'-thioadenosine + H(+). It catalyses the reaction S-adenosyl 3-(methylsulfanyl)propylamine + putrescine = S-methyl-5'-thioadenosine + spermidine + H(+). The enzyme catalyses cadaverine + S-adenosyl 3-(methylsulfanyl)propylamine = aminopropylcadaverine + S-methyl-5'-thioadenosine + H(+). Its pathway is amine and polyamine biosynthesis; spermidine biosynthesis; spermidine from putrescine: step 1/1. Its function is as follows. Involved in the biosynthesis of polyamines which are thought to support the growth of thermophilic microorganisms under high-temperature conditions. It seems that long-chain and branched-chain of polyamines effectively stabilize DNA and RNA, respectively. Catalyzes the irreversible transfer of a propylamine group from the amino donor S-adenosylmethioninamine (decarboxy-AdoMet) to agmatine to yield N1-aminopropylagmatine. It can also use cadaverine (1,5-diaminopentane) and putrescine (1,4-diaminobutane) as substrate with a lower activity than that of agmatine. The reaction involves a nucleophilic attack on the C-3 methylene of the propylamine moiety adjacent to the positively charged sulfur of decarboxy-AdoMet. The sequence is that of Polyamine aminopropyltransferase from Thermococcus kodakarensis (strain ATCC BAA-918 / JCM 12380 / KOD1) (Pyrococcus kodakaraensis (strain KOD1)).